The following is a 258-amino-acid chain: Acyl-[acyl-carrier-protein]--UDP-N-acetylglucosamine O-acyltransferase (258 aa).

This sequence belongs to the transferase hexapeptide repeat family. LpxA subfamily. As to quaternary structure, homotrimer.

The protein resides in the cytoplasm. It carries out the reaction a (3R)-hydroxyacyl-[ACP] + UDP-N-acetyl-alpha-D-glucosamine = a UDP-3-O-[(3R)-3-hydroxyacyl]-N-acetyl-alpha-D-glucosamine + holo-[ACP]. It functions in the pathway glycolipid biosynthesis; lipid IV(A) biosynthesis; lipid IV(A) from (3R)-3-hydroxytetradecanoyl-[acyl-carrier-protein] and UDP-N-acetyl-alpha-D-glucosamine: step 1/6. Involved in the biosynthesis of lipid A, a phosphorylated glycolipid that anchors the lipopolysaccharide to the outer membrane of the cell. In Azotobacter vinelandii (strain DJ / ATCC BAA-1303), this protein is Acyl-[acyl-carrier-protein]--UDP-N-acetylglucosamine O-acyltransferase.